A 283-amino-acid chain; its full sequence is MKIIKNASQMQKIALRHIKNGDEIGLVPTMGALHEGHISLIAKSVKNDDITIVSIFVNPIQFGPNEDYLKYPRPVKKDKEICKKNHVDYVFMPSVNDMFPADHKTFIEVKTLQDILCGAFRINHFKGVATVIAKLFNISCADRAYFGMKDFQQLKIIEKMGKDLNFRTKIIPCSIVRERNGLALSSRNSYLSAEGKKRSLNISKSLKEAAEDFKRRDLNFVKKTVINKLKKIPGSEIDYAEIVNFDDLLPADKNTKKAVFAVAVWIGKTRLIDNIMMIKDKDS.

ATP is bound at residue 30–37 (MGALHEGH). The active-site Proton donor is His37. Gln61 contributes to the (R)-pantoate binding site. Gln61 serves as a coordination point for beta-alanine. Residue 147–150 (GMKD) coordinates ATP. Gln153 lines the (R)-pantoate pocket. ATP contacts are provided by residues Val176 and 184–187 (LSSR).

It belongs to the pantothenate synthetase family. Homodimer.

Its subcellular location is the cytoplasm. It carries out the reaction (R)-pantoate + beta-alanine + ATP = (R)-pantothenate + AMP + diphosphate + H(+). It functions in the pathway cofactor biosynthesis; (R)-pantothenate biosynthesis; (R)-pantothenate from (R)-pantoate and beta-alanine: step 1/1. Functionally, catalyzes the condensation of pantoate with beta-alanine in an ATP-dependent reaction via a pantoyl-adenylate intermediate. The chain is Pantothenate synthetase from Endomicrobium trichonymphae.